A 98-amino-acid polypeptide reads, in one-letter code: uncharacterized protein (98 aa).

This is an uncharacterized protein from Methanocaldococcus jannaschii (strain ATCC 43067 / DSM 2661 / JAL-1 / JCM 10045 / NBRC 100440) (Methanococcus jannaschii).